A 244-amino-acid chain; its full sequence is 1-(5-phosphoribosyl)-5-[(5-phosphoribosylamino)methylideneamino] imidazole-4-carboxamide isomerase (244 aa).

Catalysis depends on Asp8, which acts as the Proton acceptor. The Proton donor role is filled by Asp129.

The protein belongs to the HisA/HisF family.

It localises to the cytoplasm. The catalysed reaction is 1-(5-phospho-beta-D-ribosyl)-5-[(5-phospho-beta-D-ribosylamino)methylideneamino]imidazole-4-carboxamide = 5-[(5-phospho-1-deoxy-D-ribulos-1-ylimino)methylamino]-1-(5-phospho-beta-D-ribosyl)imidazole-4-carboxamide. The protein operates within amino-acid biosynthesis; L-histidine biosynthesis; L-histidine from 5-phospho-alpha-D-ribose 1-diphosphate: step 4/9. This is 1-(5-phosphoribosyl)-5-[(5-phosphoribosylamino)methylideneamino] imidazole-4-carboxamide isomerase from Allorhizobium ampelinum (strain ATCC BAA-846 / DSM 112012 / S4) (Agrobacterium vitis (strain S4)).